The sequence spans 203 residues: Endo-type membrane-bound lytic murein transglycosylase A (203 aa).

Positions 1–15 (MKLRWFAFLIVLLAG) are cleaved as a signal peptide. Residue Cys16 is the site of N-palmitoyl cysteine attachment. A lipid anchor (S-diacylglycerol cysteine) is attached at Cys16.

The protein belongs to the transglycosylase Slt family.

It localises to the cell outer membrane. The catalysed reaction is Endolytic cleavage of the (1-&gt;4)-beta-glycosidic linkage between N-acetylmuramic acid (MurNAc) and N-acetylglucosamine (GlcNAc) residues in peptidoglycan with concomitant formation of a 1,6-anhydrobond in the MurNAc residue.. Murein-degrading enzyme. May play a role in recycling of muropeptides during cell elongation and/or cell division. Preferentially cleaves at a distance of more than two disaccharide units from the ends of the glycan chain. This Shigella boydii serotype 4 (strain Sb227) protein is Endo-type membrane-bound lytic murein transglycosylase A.